An 83-amino-acid chain; its full sequence is ATP synthase subunit c, chloroplastic (83 aa).

Helical transmembrane passes span 3-23 (PLIA…AAIG) and 57-77 (FAFM…LLFA).

This sequence belongs to the ATPase C chain family. F-type ATPases have 2 components, F(1) - the catalytic core - and F(0) - the membrane proton channel. F(1) has five subunits: alpha(3), beta(3), gamma(1), delta(1), epsilon(1). F(0) has four main subunits: a(1), b(1), b'(1) and c(10-14). The alpha and beta chains form an alternating ring which encloses part of the gamma chain. F(1) is attached to F(0) by a central stalk formed by the gamma and epsilon chains, while a peripheral stalk is formed by the delta, b and b' chains.

It localises to the plastid. Its subcellular location is the chloroplast thylakoid membrane. In terms of biological role, f(1)F(0) ATP synthase produces ATP from ADP in the presence of a proton or sodium gradient. F-type ATPases consist of two structural domains, F(1) containing the extramembraneous catalytic core and F(0) containing the membrane proton channel, linked together by a central stalk and a peripheral stalk. During catalysis, ATP synthesis in the catalytic domain of F(1) is coupled via a rotary mechanism of the central stalk subunits to proton translocation. Its function is as follows. Key component of the F(0) channel; it plays a direct role in translocation across the membrane. A homomeric c-ring of between 10-14 subunits forms the central stalk rotor element with the F(1) delta and epsilon subunits. The sequence is that of ATP synthase subunit c, chloroplastic from Oedogonium cardiacum (Filamentous green alga).